The sequence spans 142 residues: Hemoglobin subunit alpha-1/2 (142 aa).

One can recognise a Globin domain in the interval 2–142; that stretch reads VLSADDKTNI…VSTVLTSKYR (141 aa). Serine 4 is subject to Phosphoserine. An N6-succinyllysine modification is found at lysine 8. Threonine 9 carries the post-translational modification Phosphothreonine. At lysine 12 the chain carries N6-succinyllysine. Residue lysine 17 is modified to N6-acetyllysine; alternate. The residue at position 17 (lysine 17) is an N6-succinyllysine; alternate. Tyrosine 25 carries the phosphotyrosine modification. Lysine 41 bears the N6-succinyllysine mark. At serine 50 the chain carries Phosphoserine. Histidine 59 contributes to the O2 binding site. Position 88 (histidine 88) interacts with heme b. A Phosphoserine modification is found at serine 103. Residue threonine 109 is modified to Phosphothreonine. Serine 125 and serine 132 each carry phosphoserine. Phosphothreonine occurs at positions 135 and 138. The residue at position 139 (serine 139) is a Phosphoserine.

The protein belongs to the globin family. Heterotetramer of two alpha chains and two beta chains. Red blood cells.

Its function is as follows. Involved in oxygen transport from the lung to the various peripheral tissues. In terms of biological role, hemopressin acts as an antagonist peptide of the cannabinoid receptor CNR1. Hemopressin-binding efficiently blocks cannabinoid receptor CNR1 and subsequent signaling. In Rattus norvegicus (Rat), this protein is Hemoglobin subunit alpha-1/2 (Hba1).